A 303-amino-acid chain; its full sequence is Lysosomal amino acid transporter 1 homolog (303 aa).

Residues 1 to 38 (MAEGLRAPPPPGNGSECPDGARWVLRLLGECARDGRDV) lie on the Lumenal side of the membrane. An N-linked (GlcNAc...) asparagine glycan is attached at Asn-13. Residues 36-102 (RDVGSALLGL…LANQLPLQVY (67 aa)) enclose the PQ-loop 1 domain. Residues 39–59 (GSALLGLLSIGCFAAAALPQF) traverse the membrane as a helical segment. Residues 60-73 (YQACKTGIMDRALS) lie on the Cytoplasmic side of the membrane. A helical membrane pass occupies residues 74–94 (IYFLLGWLGGDLLNLIGSFLA). The Lumenal portion of the chain corresponds to 95 to 96 (NQ). The chain crosses the membrane as a helical span at residues 97 to 117 (LPLQVYTAVYYVLADLVMLSL). Over 118-131 (YGYYKAKNWGTGAT) the chain is Cytoplasmic. The chain crosses the membrane as a helical span at residues 132 to 152 (ASINAACLFCLLGTATTLTVL). Topologically, residues 153–182 (SHDTGPAPNPAAFGGRSLLSLGLEGPGPEP) are lumenal. The helical transmembrane segment at 183 to 203 (ISKTEIIGFAIGSISSVLYLC) threads the bilayer. One can recognise a PQ-loop 2 domain in the interval 186–251 (TEIIGFAIGS…LKNPEPGQSE (66 aa)). At 204 to 220 (SRLPQIYTNYRRKSTAG) the chain is on the cytoplasmic side. Residues 221-241 (VSFLLFALVMLGNLLYGTSVL) form a helical membrane-spanning segment. At 242–260 (LKNPEPGQSEGDYILHHLP) the chain is on the lumenal side. Residues 261 to 281 (WLIGSLGVLSLDVIISFQFLA) form a helical membrane-spanning segment. The Cytoplasmic portion of the chain corresponds to 282–303 (YRTGQPSAGEEREALLAEHGDS). The Di-leucine motif motif lies at 296–297 (LL).

This sequence belongs to the laat-1 family.

It localises to the lysosome membrane. Functionally, amino acid transporter that specifically mediates the pH-dependent export of the cationic amino acids arginine, histidine and lysine from lysosomes. The chain is Lysosomal amino acid transporter 1 homolog (SLC66A1) from Gallus gallus (Chicken).